The sequence spans 554 residues: Phenylalanine--tRNA ligase beta subunit (554 aa).

Residues 276-351 (LTLKSRIISI…INYGYEKFEG (76 aa)) enclose the B5 domain. Mg(2+) contacts are provided by Asp329, Asp335, Glu338, and Glu339.

The protein belongs to the phenylalanyl-tRNA synthetase beta subunit family. Type 2 subfamily. Tetramer of two alpha and two beta subunits. The cofactor is Mg(2+).

The protein localises to the cytoplasm. It carries out the reaction tRNA(Phe) + L-phenylalanine + ATP = L-phenylalanyl-tRNA(Phe) + AMP + diphosphate + H(+). This Methanococcus maripaludis (strain C7 / ATCC BAA-1331) protein is Phenylalanine--tRNA ligase beta subunit.